We begin with the raw amino-acid sequence, 228 residues long: Probable endonuclease LCL3 (228 aa).

A helical membrane pass occupies residues 13-30 (LLVSAGFTTSLFVGFNLY). One can recognise a TNase-like domain in the interval 52-210 (RQLYGKVTRV…KLLRRGVWSL (159 aa)). Residue Arg-101 is part of the active site. Asp-106 serves as a coordination point for Ca(2+). Residues Glu-109 and Arg-149 contribute to the active site.

Belongs to the LCL3 family.

It localises to the mitochondrion. Its subcellular location is the membrane. The chain is Probable endonuclease LCL3 (LCL3) from Meyerozyma guilliermondii (strain ATCC 6260 / CBS 566 / DSM 6381 / JCM 1539 / NBRC 10279 / NRRL Y-324) (Yeast).